A 157-amino-acid chain; its full sequence is 2-C-methyl-D-erythritol 2,4-cyclodiphosphate synthase (157 aa).

2 residues coordinate a divalent metal cation: aspartate 8 and histidine 10. 4-CDP-2-C-methyl-D-erythritol 2-phosphate-binding positions include 8-10 (DVH) and 34-35 (HS). Histidine 42 provides a ligand contact to a divalent metal cation. 4-CDP-2-C-methyl-D-erythritol 2-phosphate-binding positions include 56-58 (DIG), 61-65 (FPDTD), 100-106 (AQAPKMA), 132-135 (TTTE), phenylalanine 139, and arginine 142.

Belongs to the IspF family. In terms of assembly, homotrimer. Requires a divalent metal cation as cofactor.

It catalyses the reaction 4-CDP-2-C-methyl-D-erythritol 2-phosphate = 2-C-methyl-D-erythritol 2,4-cyclic diphosphate + CMP. It functions in the pathway isoprenoid biosynthesis; isopentenyl diphosphate biosynthesis via DXP pathway; isopentenyl diphosphate from 1-deoxy-D-xylulose 5-phosphate: step 4/6. Its function is as follows. Involved in the biosynthesis of isopentenyl diphosphate (IPP) and dimethylallyl diphosphate (DMAPP), two major building blocks of isoprenoid compounds. Catalyzes the conversion of 4-diphosphocytidyl-2-C-methyl-D-erythritol 2-phosphate (CDP-ME2P) to 2-C-methyl-D-erythritol 2,4-cyclodiphosphate (ME-CPP) with a corresponding release of cytidine 5-monophosphate (CMP). The polypeptide is 2-C-methyl-D-erythritol 2,4-cyclodiphosphate synthase (Pseudomonas syringae pv. tomato (strain ATCC BAA-871 / DC3000)).